A 638-amino-acid polypeptide reads, in one-letter code: Guanylate-binding protein 7 (638 aa).

Residues 1–310 (MASGPNMEAP…DAINSGDVPC (310 aa)) form a GTPase domain (Globular) region. The GB1/RHD3-type G domain occupies 35 to 277 (TQPVVVVAIV…FCSYIFSNSK (243 aa)). Residues 45–52 (GLYRTGKS), 67–69 (LGT), and 97–101 (DTEGL) contribute to the GTP site. The tract at residues 311 to 638 (LENAVTTLAQ…TQNSDKVRKL (328 aa)) is interaction with the CYBA-CYBB complex. A C-terminal tail; required for its localization to cytoplasmic vesicle region spans residues 590-638 (SSLGAKILDGFGDVLISVVPGSGKYFGLGLKILSSQMNQTQNSDKVRKL).

It belongs to the TRAFAC class dynamin-like GTPase superfamily. GB1/RHD3 GTPase family. GB1 subfamily. Monomer and dimer. Interacts with CYBA, CYBA-CYBB complex and ATG4B. Interacts (via GB1/RHD3-type G domain) with NCF2 and NCF2-NCF4 complex.

The protein resides in the cytoplasmic vesicle membrane. It carries out the reaction GTP + H2O = GDP + phosphate + H(+). The enzyme catalyses GDP + H2O = GMP + phosphate + H(+). With respect to regulation, inhibited by orthovanadate, berylium fluoride and aluminum flouride. Functionally, interferon (IFN)-inducible GTPase that plays important roles in innate immunity against a diverse range of bacterial, viral and protozoan pathogens. Hydrolyzes GTP to GMP in two consecutive cleavage reactions and predominantly uses GTP and not GDP or GMP as the substrate. Following infection, recruited to the pathogen-containing vacuoles or vacuole-escaped bacteria and acts as a positive regulator of inflammasome assembly by promoting the release of inflammasome ligands from bacteria. Acts by promoting lysis of pathogen-containing vacuoles, releasing pathogens into the cytosol. Following pathogen release in the cytosol, promotes recruitment of proteins that mediate bacterial cytolysis, such as Gm12250/Irgb10: this liberates ligands that are detected by inflammasomes, such as lipopolysaccharide (LPS) that activates the non-canonical CASP4/CASP11 inflammasome or double-stranded DNA (dsDNA) that activates the AIM2 inflammasome. Also promotes IFN-gamma-mediated host defense against bacterial infections by regulating oxidative responses and bacteriolytic peptide generation. May help to assemble NADPH oxidase on phagosomal membranes by acting as a bridging protein between NADPH oxidase cytosolic subunits NCF2-NCF4 and the membrane subunits CYBA-CYBB. Participates along with GBP1 in trafficking monoubiquinated protein cargo to autolysosomes for generating ubiquitin-derived antimicrobial peptides. Facilitates influenza A virus replication by inhibiting the activation of NF-kappaB and JAK-STAT signaling pathways and the expression of type I, type III interferons and pro-inflammatory cytokines. Confers protection to several pathogens, including the bacterial pathogens Listeria monocytogenes and Mycobacterium bovis BCG as well as the protozoan pathogen Toxoplasma gondii. Required for disruption of the parasitophorous vacuole formed following T.gondii infection and subsequent killing of the parasite. The chain is Guanylate-binding protein 7 (Gbp7) from Mus musculus (Mouse).